The primary structure comprises 555 residues: Carboxylic ester hydrolase (555 aa).

The signal sequence occupies residues 1 to 19; sequence MELSVIALLLLGFVNFSWQ. A disulfide bond links C86 and C107. 2 N-linked (GlcNAc...) asparagine glycosylation sites follow: N120 and N144. S211 acts as the Acyl-ester intermediate in catalysis. A disulfide bond links C263 and C274. E336 functions as the Charge relay system in the catalytic mechanism. N-linked (GlcNAc...) asparagine glycans are attached at residues N369 and N397. The Charge relay system role is filled by H459. N473 and N533 each carry an N-linked (GlcNAc...) asparagine glycan.

The protein belongs to the type-B carboxylesterase/lipase family. N-glycosylated. In terms of tissue distribution, expressed in several tissues, including epidermis (at protein level), fat body (at protein level), gut (at protein level), muscle (at protein level), and venom gland (at protein level).

The protein resides in the secreted. The catalysed reaction is a carboxylic ester + H2O = an alcohol + a carboxylate + H(+). Its function is as follows. Lipolytic agent that may be involved in distributing the venom via degradation of blood triglycerides. The recombinant protein degrades triglycerides and exhibits high lipolytic activity toward long-chain triglycerides (tested on tributyrin, trioctanoin and triolein). Does not affect mammalian cells. The sequence is that of Carboxylic ester hydrolase (vCaE) from Bombus ignitus (Bumblebee).